Here is a 291-residue protein sequence, read N- to C-terminus: Small ribosomal subunit protein uS2 (291 aa).

The tract at residues 256-291 (LRGEGTAPAASEEQPAEEPAPAAAEAQTDAAVGTAV) is disordered. A compositionally biased stretch (low complexity) spans 261–291 (TAPAASEEQPAEEPAPAAAEAQTDAAVGTAV).

This sequence belongs to the universal ribosomal protein uS2 family.

The protein is Small ribosomal subunit protein uS2 of Frankia alni (strain DSM 45986 / CECT 9034 / ACN14a).